Consider the following 346-residue polypeptide: Biotin synthase (346 aa).

Residues 38–256 (RQVQVSTLLS…IAVARIMMPT (219 aa)) form the Radical SAM core domain. [4Fe-4S] cluster contacts are provided by Cys53, Cys57, and Cys60. The [2Fe-2S] cluster site is built by Cys97, Cys128, Cys188, and Arg260.

The protein belongs to the radical SAM superfamily. Biotin synthase family. Homodimer. [4Fe-4S] cluster serves as cofactor. [2Fe-2S] cluster is required as a cofactor.

It carries out the reaction (4R,5S)-dethiobiotin + (sulfur carrier)-SH + 2 reduced [2Fe-2S]-[ferredoxin] + 2 S-adenosyl-L-methionine = (sulfur carrier)-H + biotin + 2 5'-deoxyadenosine + 2 L-methionine + 2 oxidized [2Fe-2S]-[ferredoxin]. Its pathway is cofactor biosynthesis; biotin biosynthesis; biotin from 7,8-diaminononanoate: step 2/2. Catalyzes the conversion of dethiobiotin (DTB) to biotin by the insertion of a sulfur atom into dethiobiotin via a radical-based mechanism. This is Biotin synthase from Shigella flexneri serotype 5b (strain 8401).